The sequence spans 1430 residues: Transport and Golgi organization protein 1 (1430 aa).

The first 34 residues, 1-34, serve as a signal peptide directing secretion; sequence MRLTNEKATMQPQLSDLALVLGLLICCLPTLTWA. Residues 35–796 are Extracellular-facing; sequence ATLSDKRLCA…ADKLVDHSQL (762 aa). Positions 50–112 constitute an SH3 domain; the sequence is QIISMGIAKI…NKDFIMEKKI (63 aa). 5 disordered regions span residues 253–272, 284–303, 318–362, 445–524, and 568–673; these read QEEP…PPLP, DFDY…SQDN, ESIE…SLPT, SDAE…DQQK, and EEAE…TDNH. Over residues 284-296 the composition is skewed to acidic residues; sequence DFDYGDDETDDDS. Basic and acidic residues-rich tracts occupy residues 331–357, 497–524, and 568–588; these read KKTD…KQED, LQEE…DQQK, and EEAE…RSSE. Positions 494–620 form a coiled coil; sequence YKQLQEEQEK…QSNEIVDNNN (127 aa). Residues 594–621 show a composition bias toward polar residues; that stretch reads LSVQEANMQQLNDSVDSQSNEIVDNNNR. Residues 640–651 are compositionally biased toward low complexity; sequence HPSTASHTTPTP. The chain crosses the membrane as a helical span at residues 797–817; that stretch reads LLCVVIAAISSLFFMFAYYCF. At 818–1430 the chain is on the cytoplasmic side; it reads CNSSQEGALL…SATSRPYSEV (613 aa). A phosphoserine mark is found at Ser865 and Ser868. Residues 869 to 1245 adopt a coiled-coil conformation; that stretch reads NDMVADLKKQ…SLRRKLTTMA (377 aa). A compositionally biased stretch (low complexity) spans 1105-1114; that stretch reads SQLQQSSQDV. Disordered regions lie at residues 1105-1126 and 1312-1430; these read SQLQ…QSER and LPPT…YSEV. Basic and acidic residues predominate over residues 1115–1126; that stretch reads EQLKQDFNQSER. Over residues 1321 to 1334 the composition is skewed to pro residues; sequence RPPPLGRMRSPPPS. Positions 1336–1346 are enriched in basic and acidic residues; the sequence is RGDRDRERYSD. A phosphoserine mark is found at Ser1345 and Ser1348. Positions 1348 to 1361 are enriched in acidic residues; the sequence is SDYDDYDDDEEDDR. A compositionally biased stretch (basic residues) spans 1364-1380; it reads DRRRRHSGSWGRRHRGS. Residues 1387 to 1402 show a composition bias toward polar residues; sequence TYRSLSPSDSRYNYND. Phosphoserine is present on residues Ser1390 and Ser1392. The segment covering 1408 to 1417 has biased composition (pro residues); the sequence is SPPPSPPPVP. Polar residues predominate over residues 1420-1430; sequence RSATSRPYSEV.

The protein belongs to the MIA/OTOR family. Tango1 subfamily.

The protein localises to the golgi apparatus membrane. It is found in the golgi apparatus. Its subcellular location is the trans-Golgi network. Required for protein secretion. May participate in cargo loading by binding to COPII coat subunits and guiding SH3-bound proteins into a growing carrier. At basal transitional ER sites in follicle epithelial cells, mediates the exit of basal membrane protein such as vkg, LanB1 and Trol, from the endoplasmic reticulum (ER) to basal Golgi clusters. This is Transport and Golgi organization protein 1 from Drosophila melanogaster (Fruit fly).